The sequence spans 209 residues: MSIKYIASSKLPTPWGVFEMHGFEDSETGKEHVALTFGTFTPDAPILGRIHSECLTGDALFSLRCDCGFQLQTAMQNIAEEGQGFILYLRQEGRGIGLLNKIRAYELQDQGANTVEANERLGFEADMRKYDMIIPMMEKIGVDKVRLMTNNPRKVKAMQSFGLEVVERVPLQVGKNRYNEGYLKTKSTQLGHMMSEHHFTETDPEVDKD.

49-53 is a GTP binding site; that stretch reads RIHSE. Zn(2+) is bound by residues Cys54, Cys65, and Cys67. Residues Gln70, 92 to 94, and Thr114 each bind GTP; that span reads EGR. The active-site Proton acceptor is the Asp126. Catalysis depends on Arg128, which acts as the Nucleophile. The GTP site is built by Thr149 and Lys154.

This sequence belongs to the GTP cyclohydrolase II family. The cofactor is Zn(2+).

It carries out the reaction GTP + 4 H2O = 2,5-diamino-6-hydroxy-4-(5-phosphoribosylamino)-pyrimidine + formate + 2 phosphate + 3 H(+). It functions in the pathway cofactor biosynthesis; riboflavin biosynthesis; 5-amino-6-(D-ribitylamino)uracil from GTP: step 1/4. In terms of biological role, catalyzes the conversion of GTP to 2,5-diamino-6-ribosylamino-4(3H)-pyrimidinone 5'-phosphate (DARP), formate and pyrophosphate. The sequence is that of GTP cyclohydrolase-2 from Shewanella pealeana (strain ATCC 700345 / ANG-SQ1).